We begin with the raw amino-acid sequence, 101 residues long: ATP synthase subunit c (101 aa).

2 helical membrane-spanning segments follow: residues 35–55 (IGAGLASVGILGTGVGQGLIG) and 81–101 (GISESGAIYSLVIAILLIFVV).

This sequence belongs to the ATPase C chain family. In terms of assembly, F-type ATPases have 2 components, F(1) - the catalytic core - and F(0) - the membrane proton channel. F(1) has five subunits: alpha(3), beta(3), gamma(1), delta(1), epsilon(1). F(0) has three main subunits: a(1), b(2) and c(10-14). The alpha and beta chains form an alternating ring which encloses part of the gamma chain. F(1) is attached to F(0) by a central stalk formed by the gamma and epsilon chains, while a peripheral stalk is formed by the delta and b chains.

It localises to the cell membrane. Functionally, f(1)F(0) ATP synthase produces ATP from ADP in the presence of a proton or sodium gradient. F-type ATPases consist of two structural domains, F(1) containing the extramembraneous catalytic core and F(0) containing the membrane proton channel, linked together by a central stalk and a peripheral stalk. During catalysis, ATP synthesis in the catalytic domain of F(1) is coupled via a rotary mechanism of the central stalk subunits to proton translocation. Key component of the F(0) channel; it plays a direct role in translocation across the membrane. A homomeric c-ring of between 10-14 subunits forms the central stalk rotor element with the F(1) delta and epsilon subunits. This is ATP synthase subunit c from Mycoplasma capricolum subsp. capricolum (strain California kid / ATCC 27343 / NCTC 10154).